A 69-amino-acid polypeptide reads, in one-letter code: Conotoxin reg3f (69 aa).

An N-terminal signal peptide occupies residues 1–20 (MMSKLGVLLTICLLLFPLSA). A propeptide spanning residues 21 to 52 (LPLDGDQPADQPAERMQDISPEQNPLFHPDKR) is cleaved from the precursor. Intrachain disulfides connect Cys-54/Cys-68, Cys-55/Cys-66, and Cys-60/Cys-69. Cys-69 is subject to Cysteine amide.

Expressed by the venom duct.

It localises to the secreted. The polypeptide is Conotoxin reg3f (Conus regius (Crown cone)).